We begin with the raw amino-acid sequence, 661 residues long: Pentatricopeptide repeat-containing protein At3g04750, mitochondrial (661 aa).

Residues 1–18 constitute a mitochondrion transit peptide; that stretch reads MCFVLLLRRGFRLFGTEC. PPR repeat units follow at residues 99–131, 132–163, 165–195, 196–230, 231–265, 268–298, 299–333, 334–366, 367–401, 402–432, 433–467, 468–498, and 504–539; these read NVFV…RVSP, DRQT…GCLS, GNYL…MPHP, DVSS…GIEP, DEYT…GPVY, NLIL…MKKK, DMRS…DLVS, WNSL…KVKP, DRVT…QLKG, DAFL…ATEK, DVAL…GVTP, NNVT…MKDK, and ETEH…PSQS. The type E motif stretch occupies residues 540-615; it reads MWGSILSACR…TAGYSSVVGV (76 aa). The tract at residues 616-647 is type E(+) motif; the sequence is EGLHRFVAAEKQNHPRWTEIKRILQHLYNEMK.

Belongs to the PPR family. PCMP-E subfamily.

The protein resides in the mitochondrion. This Arabidopsis thaliana (Mouse-ear cress) protein is Pentatricopeptide repeat-containing protein At3g04750, mitochondrial (PCMP-E81).